A 227-amino-acid polypeptide reads, in one-letter code: Probable 2-phosphosulfolactate phosphatase (227 aa).

This sequence belongs to the ComB family. The cofactor is Mg(2+).

The enzyme catalyses (2R)-O-phospho-3-sulfolactate + H2O = (2R)-3-sulfolactate + phosphate. In Thermotoga petrophila (strain ATCC BAA-488 / DSM 13995 / JCM 10881 / RKU-1), this protein is Probable 2-phosphosulfolactate phosphatase.